The following is a 178-amino-acid chain: MSRVGKYPVEVPAGVQVSVADGFFKAKGKLGELTVPVSRHVEVKIEGSNVSVAPVGRRSRENWTMWGTTRALIANTVKGVSDGFSKGLEIQGTGFRAAVQGSNLVMNLGFSHDVVYPIPEGIKITTPRPTAIVVEGNDKQRVGQVALDIRSFRKPEPYKGKGVRYETEVLRRKEGKKK.

This sequence belongs to the universal ribosomal protein uL6 family. In terms of assembly, part of the 50S ribosomal subunit.

Functionally, this protein binds to the 23S rRNA, and is important in its secondary structure. It is located near the subunit interface in the base of the L7/L12 stalk, and near the tRNA binding site of the peptidyltransferase center. The protein is Large ribosomal subunit protein uL6 of Gluconobacter oxydans (strain 621H) (Gluconobacter suboxydans).